The chain runs to 432 residues: Bifunctional IPC transferase and DIPP synthase (432 aa).

The interval 3–225 is mobA-like NTP transferase; sequence PERAVILAAG…RARRMLVRTA (223 aa). CTP is bound by residues 9 to 11, Lys22, and Glu113; that span reads LAA. Glu113 lines the Mg(2+) pocket. The segment at 226 to 426 is CDP-alcohol phosphatidyltransferases; the sequence is VKGTGDGFVS…LTLYFVVKKV (201 aa). 3 consecutive transmembrane segments (helical) span residues 264–284, 337–356, and 385–405; these read FLLG…AGIL, IWYF…SYST, and VFLT…ALFL.

In the N-terminal section; belongs to the MobA family. This sequence in the C-terminal section; belongs to the CDP-alcohol phosphatidyltransferase class-I family. The cofactor is Mg(2+).

The protein resides in the membrane. It catalyses the reaction 1D-myo-inositol 3-phosphate + CTP + H(+) = CDP-1L-myo-inositol + diphosphate. The catalysed reaction is CDP-1L-myo-inositol + 1D-myo-inositol 3-phosphate = bis(1L-myo-inositol) 3,1'-phosphate 1-phosphate + CMP + H(+). Functionally, involved in biosynthesis of di-myo-inositol phosphate (DIP), a widespread organic solute in microorganisms adapted to hot environments. Catalyzes the condensation of CTP and L-myo-inositol-1-phosphate into CDP-L-myo-inositol, as well as the biosynthesis of di-myo-inositol-1,3'-phosphate-1'-phosphate (DIPP) from CDP-L-myo-inositol and L-myo-inositol-1-phosphate. The protein is Bifunctional IPC transferase and DIPP synthase of Thermococcus kodakarensis (strain ATCC BAA-918 / JCM 12380 / KOD1) (Pyrococcus kodakaraensis (strain KOD1)).